Reading from the N-terminus, the 78-residue chain is Probable [Fe-S]-dependent transcriptional repressor (78 aa).

4 residues coordinate iron-sulfur cluster: C56, C61, C64, and C70.

This sequence belongs to the FeoC family.

Its function is as follows. May function as a transcriptional regulator that controls feoABC expression. The sequence is that of Probable [Fe-S]-dependent transcriptional repressor from Citrobacter koseri (strain ATCC BAA-895 / CDC 4225-83 / SGSC4696).